Here is a 159-residue protein sequence, read N- to C-terminus: 2-C-methyl-D-erythritol 2,4-cyclodiphosphate synthase (159 aa).

2 residues coordinate a divalent metal cation: D8 and H10. 4-CDP-2-C-methyl-D-erythritol 2-phosphate-binding positions include 8-10 (DVH) and 34-35 (HS). Residue H42 coordinates a divalent metal cation. 4-CDP-2-C-methyl-D-erythritol 2-phosphate is bound by residues 56–58 (DIG), 61–65 (FPDTD), 100–106 (AQAPKML), 132–135 (TTTE), F139, and R142.

It belongs to the IspF family. In terms of assembly, homotrimer. A divalent metal cation serves as cofactor.

The enzyme catalyses 4-CDP-2-C-methyl-D-erythritol 2-phosphate = 2-C-methyl-D-erythritol 2,4-cyclic diphosphate + CMP. It participates in isoprenoid biosynthesis; isopentenyl diphosphate biosynthesis via DXP pathway; isopentenyl diphosphate from 1-deoxy-D-xylulose 5-phosphate: step 4/6. In terms of biological role, involved in the biosynthesis of isopentenyl diphosphate (IPP) and dimethylallyl diphosphate (DMAPP), two major building blocks of isoprenoid compounds. Catalyzes the conversion of 4-diphosphocytidyl-2-C-methyl-D-erythritol 2-phosphate (CDP-ME2P) to 2-C-methyl-D-erythritol 2,4-cyclodiphosphate (ME-CPP) with a corresponding release of cytidine 5-monophosphate (CMP). In Escherichia coli O139:H28 (strain E24377A / ETEC), this protein is 2-C-methyl-D-erythritol 2,4-cyclodiphosphate synthase.